A 448-amino-acid polypeptide reads, in one-letter code: T-box transcription factor TBX19 (448 aa).

The T-box DNA-binding region spans 45–218 (LEDAPLWQRF…YNPFAKAFLD (174 aa)).

The protein resides in the nucleus. Transcriptional regulator involved in developmental processes. Can activate POMC gene expression and repress the alpha glycoprotein subunit and thyroid-stimulating hormone beta promoters. The chain is T-box transcription factor TBX19 from Homo sapiens (Human).